Here is a 394-residue protein sequence, read N- to C-terminus: Enoyl-[acyl-carrier-protein] reductase [NADH] (394 aa).

NAD(+) is bound by residues 48 to 53 (GASTGY), 74 to 75 (YE), 111 to 112 (DA), and 139 to 140 (LA). Y225 serves as a coordination point for substrate. Y235 serves as the catalytic Proton donor. Residues K244 and 273-275 (LVT) each bind NAD(+).

This sequence belongs to the TER reductase family. As to quaternary structure, monomer.

The enzyme catalyses a 2,3-saturated acyl-[ACP] + NAD(+) = a (2E)-enoyl-[ACP] + NADH + H(+). The protein operates within lipid metabolism; fatty acid biosynthesis. In terms of biological role, involved in the final reduction of the elongation cycle of fatty acid synthesis (FAS II). Catalyzes the reduction of a carbon-carbon double bond in an enoyl moiety that is covalently linked to an acyl carrier protein (ACP). In Opitutus terrae (strain DSM 11246 / JCM 15787 / PB90-1), this protein is Enoyl-[acyl-carrier-protein] reductase [NADH].